We begin with the raw amino-acid sequence, 706 residues long: Polyribonucleotide nucleotidyltransferase (706 aa).

2 residues coordinate Mg(2+): Asp486 and Asp492. The region spanning 552 to 611 is the KH domain; sequence PRIIAMKINPEKIRDVIGKGGAVIRALTEETGTQIDIQEDGSVKIACTSMEAGELAKKRI. An S1 motif domain is found at 621–689; it reads GKVYEGPVIK…EKGRLRLSMK (69 aa).

This sequence belongs to the polyribonucleotide nucleotidyltransferase family. Requires Mg(2+) as cofactor.

It is found in the cytoplasm. It catalyses the reaction RNA(n+1) + phosphate = RNA(n) + a ribonucleoside 5'-diphosphate. In terms of biological role, involved in mRNA degradation. Catalyzes the phosphorolysis of single-stranded polyribonucleotides processively in the 3'- to 5'-direction. The chain is Polyribonucleotide nucleotidyltransferase from Thiobacillus denitrificans (strain ATCC 25259 / T1).